The primary structure comprises 4834 residues: E3 ubiquitin-protein ligase HERC2 (4834 aa).

The disordered stretch occupies residues 50–88 (TESTQNGELPPRKDDSVEPSGTKKEDLNDKEKKDEEETP). Basic and acidic residues predominate over residues 59 to 84 (PPRKDDSVEPSGTKKEDLNDKEKKDE). Position 272 is a phosphothreonine (Thr-272). Residues 415–461 (PTSHKGSLQEVIGWGLIGWKYYANVIGPIQCEGLANLGVTQIACAEK) form an RCC1 1-1 repeat. One copy of the RCC1 1-2 repeat lies at 462-512 (RFLILSRNGRVYTQAYNSDTLAPQLVQGLASRNIVKIAAHSDGHHYLALAA). An RCC1 1-3 repeat occupies 513 to 568 (TGEVYSWGCGDGGRLGHGDTVPLEEPKVISAFSGKQAGKHVVHIACGSTYSAAITA). An RCC1 1-4 repeat occupies 569-620 (EGELYTWGRGNYGRLGHGSSEDEAIPMLVAGLKGLKVIDVACGSGDAQTLAV). Residues 623–674 (NGQVWSWGDGDYGKLGRGGSDGCKTPKLIEKLQDLDVVKVRCGSQFSIALTK) form an RCC1 1-5 repeat. Position 647 is a phosphothreonine (Thr-647). An RCC1 1-6 repeat occupies 675-726 (DGQVYSWGKGDNQRLGHGTEEHVRYPKLLEGLQGKKVIDVAAGSTHCLALTE). One copy of the RCC1 1-7 repeat lies at 728-778 (SEVHSWGSNDQCQHFDTLRVTKPEPAALPGLDTKHIVGIACGPAQSFAWSS). A coiled-coil region spans residues 948 to 980 (LHAAITAEIQDIEAKKEAQKEKEIDEQEANAST). Residues 1207-1283 (VTLIRKADLE…MHAFCVGQYL (77 aa)) enclose the Cytochrome b5 heme-binding domain. A disordered region spans residues 1555–1575 (RKKRVPKKPESTDDEEKIGNE). Positions 1566 to 1575 (TDDEEKIGNE) are enriched in acidic residues. Ser-1577 is modified (phosphoserine). The 74-residue stretch at 1859-1932 (SGPELAAMMK…KYDLKLAELP (74 aa)) folds into the MIB/HERC2 domain. The disordered stretch occupies residues 1933–1958 (AAAQPSAEDSDTEDDSEAEQTERNIH). Residues 1940-1951 (EDSDTEDDSEAE) show a composition bias toward acidic residues. Ser-1942 carries the phosphoserine modification. A Phosphothreonine modification is found at Thr-1944. A Phosphoserine modification is found at Ser-2454. In terms of domain architecture, CPH spans 2554 to 2630 (RADFLSNDDY…RYIHVELIGY (77 aa)). The ZZ-type zinc finger occupies 2703–2755 (HPGVTCDGCQMFPINGSRFKCRNCDDFDFCETCFKTKKHNTRHTFGRINEPGQ). Zn(2+)-binding residues include Cys-2708, Cys-2711, Cys-2723, Cys-2726, Cys-2732, Cys-2735, His-2741, and His-2745. A DOC domain is found at 2759 to 2936 (FCGRSGKQLK…ASDNEEEEDE (178 aa)). The residue at position 2928 (Ser-2928) is a Phosphoserine. Residues 2958–3009 (RTKVFVWGLNDKDQLGGLKGSKIKVPSFSETLSALNVVQVAGGSKSLFAVTV) form an RCC1 2-1 repeat. One copy of the RCC1 2-2 repeat lies at 3010 to 3064 (EGKVYACGEATNGRLGLGISSGTVPIPRQITALSSYVVKKVAVHSGGRHATALTV). The stretch at 3065-3116 (DGKVFSWGEGDDGKLGHFSRMNCDKPRLIEALKTKRIRDIACGSSHSAALTS) is one RCC1 2-3 repeat. The RCC1 2-4 repeat unit spans residues 3118–3168 (GELYTWGLGEYGRLGHGDNTTQLKPKMVKVLLGHRVIQVACGSRDAQTLAL). One copy of the RCC1 2-5 repeat lies at 3171-3222 (EGLVFSWGDGDFGKLGRGGSEGCNIPQNIERLNGQGVCQIECGAQFSLALTK). The RCC1 2-6 repeat unit spans residues 3224–3274 (GVVWTWGKGDYFRLGHGSDVHVRKPQVVEGLRGKKIVHVAVGALHCLAVTD). The RCC1 2-7 repeat unit spans residues 3275-3326 (SGQVYAWGDNDHGQQGNGTTTVNRKPTLVQGLEGQKITRVACGSSHSVAWTT). Composition is skewed to polar residues over residues 3602 to 3611 (SQSGRLSSQP) and 3618 to 3629 (HPYTDDTSTSGT). A disordered region spans residues 3602–3629 (SQSGRLSSQPVVVESSHPYTDDTSTSGT). Residues 3951-4002 (SGTIYGWGHNHRGQLGGIEGAKVKVPTPCEALATLRPVQLIGGEQTLFAVTA) form an RCC1 3-1 repeat. One copy of the RCC1 3-2 repeat lies at 4004–4056 (GKLYATGYGAGGRLGIGGTESVSTPTLLESIQHVFIKKVAVNSGGKHCLALSS). The stretch at 4058–4108 (GEVYSWGEAEDGKLGHGNRSPCDRPRVIESLRGIEVVDVAAGGAHSACVTA) is one RCC1 3-3 repeat. The stretch at 4110 to 4162 (GDLYTWGKGRYGRLGHSDSEDQLKPKLVEALQGHRVVDIACGSGDAQTLCLTD) is one RCC1 3-4 repeat. The RCC1 3-5 repeat unit spans residues 4164-4214 (DTVWSWGDGDYGKLGRGGSDGCKVPMKIDSLTGLGVVKVECGSQFSVALTK). The RCC1 3-6 repeat unit spans residues 4216–4266 (GAVYTWGKGDYHRLGHGSDDHVRRPRQVQGLQGKKVIAIATGSLHCVCCTE). An RCC1 3-7 repeat occupies 4268–4318 (GEVYTWGDNDEGQLGDGTTNAIQRPRLVAALQGKKVNRVACGSAHTLAWST). One can recognise an HECT domain in the interval 4457–4794 (DSLLLPHRVW…IHFCKSIDTD (338 aa)). Cys-4762 acts as the Glycyl thioester intermediate in catalysis. Residues 4804-4834 (EPAADDSSDDSDNEDVDSFASDSTQDYLTGH) are disordered. Over residues 4806 to 4820 (AADDSSDDSDNEDVD) the composition is skewed to acidic residues. Phosphoserine is present on residues Ser-4810, Ser-4811, and Ser-4814. The span at 4823–4834 (ASDSTQDYLTGH) shows a compositional bias: polar residues. Thr-4827 carries the post-translational modification Phosphothreonine.

Interacts (when phosphorylated at Thr-4827 and sumoylated) with RNF8 (via FHA domain); this interaction increases after ionizing radiation (IR) treatment. Interacts with XPA. Interacts with NEURL4. Via its interaction with NEURL4, may indirectly interact with CCP110 and CEP97. Post-translationally, phosphorylation at Thr-4827 is required for interaction with RNF8. In terms of processing, sumoylated with SUMO1 by PIAS4 in response to double-strand breaks (DSBs), promoting the interaction with RNF8.

Its subcellular location is the cytoplasm. It is found in the cytoskeleton. The protein localises to the microtubule organizing center. It localises to the centrosome. The protein resides in the centriole. Its subcellular location is the nucleus. The catalysed reaction is S-ubiquitinyl-[E2 ubiquitin-conjugating enzyme]-L-cysteine + [acceptor protein]-L-lysine = [E2 ubiquitin-conjugating enzyme]-L-cysteine + N(6)-ubiquitinyl-[acceptor protein]-L-lysine.. It functions in the pathway protein modification; protein ubiquitination. E3 ubiquitin-protein ligase that regulates ubiquitin-dependent retention of repair proteins on damaged chromosomes. Recruited to sites of DNA damage in response to ionizing radiation (IR) and facilitates the assembly of UBE2N and RNF8 promoting DNA damage-induced formation of 'Lys-63'-linked ubiquitin chains. Acts as a mediator of binding specificity between UBE2N and RNF8. Involved in the maintenance of RNF168 levels. E3 ubiquitin-protein ligase that promotes the ubiquitination and proteasomal degradation of XPA which influences the circadian oscillation of DNA excision repair activity. By controlling the steady-state expression of the IGF1R receptor, indirectly regulates the insulin-like growth factor receptor signaling pathway. Also modulates iron metabolism by regulating the basal turnover of FBXL5. The chain is E3 ubiquitin-protein ligase HERC2 from Homo sapiens (Human).